A 5233-amino-acid chain; its full sequence is E3 ubiquitin-protein ligase highwire (5233 aa).

A disordered region spans residues 197–230 (VVGGPGLPAEKRPRRDSANSDADSDTEEPTEREP). A compositionally biased stretch (basic and acidic residues) spans 205–214 (AEKRPRRDSA). Phosphoserine is present on residues serine 213 and serine 216. RCC1 repeat units lie at residues 615–666 (NGRV…ALLV), 669–724 (DGTV…FVTK), and 768–818 (KGQL…DKRL). Positions 680-700 (RGEDGDSSKNRRQPKAVKPKK) are disordered. Residues 689–700 (NRRQPKAVKPKK) show a composition bias toward basic residues. The disordered stretch occupies residues 900–950 (TELKPPPSDVQQRQQRSKTLIMRRKERKGELETGAAGGGAATPTDLDKDPP). Polar residues predominate over residues 908-917 (DVQQRQQRSK). RCC1 repeat units lie at residues 931 to 983 (ETGA…VLTL), 984 to 1033 (AGEV…LLTS), and 1035 to 1084 (GMVY…TVAP). 2 disordered regions span residues 1051-1109 (LPSD…EMPP) and 1287-1327 (AAAA…PPQL). Residues 1092–1103 (RSQSPANVQPSG) show a composition bias toward polar residues. Over residues 1287-1302 (AAAAAVAAPGTPVSAG) the composition is skewed to low complexity. The tract at residues 1436-1587 (NRFDNFGGGW…GQIPAILYRL (152 aa)) is PHR domain 1. The tract at residues 1681 to 1718 (SSTSVATGGGSNAAHGSGVVTTAKSVQSKPNKDKNTPR) is disordered. Residues 1699–1709 (VVTTAKSVQSK) show a composition bias toward polar residues. Positions 2014–2169 (ARFARCDVSR…GQLPCILYYS (156 aa)) are PHR domain 2. Disordered stretches follow at residues 2329-2353 (SADL…VPIN) and 2580-2604 (NGAG…NTHQ). Positions 2336–2350 (QSQSVSQSQSQSQSV) are enriched in low complexity. The segment at 2885 to 4082 (AEVSAPGPNL…FVSSLNPTGG (1198 aa)) is required for interaction with Rae1. One copy of the Filamin repeat lies at 2906 to 3000 (WGGMAPPPRI…LEEVYRVDVK (95 aa)). Disordered regions lie at residues 3005–3024 (PPPT…SKLR), 3117–3210 (KGVG…EPEQ), 3277–3333 (GGQD…ASET), 3348–3378 (TTTG…PMGP), 3551–3587 (PRLL…DLGR), and 3901–3936 (ASLA…APPV). Over residues 3176–3191 (KHADLAEREAQVQEER) the composition is skewed to basic and acidic residues. The span at 3192 to 3210 (EKEEEQVDDEDADDREPEQ) shows a compositional bias: acidic residues. The span at 3282–3292 (PRGNGNRSQQE) shows a compositional bias: polar residues. Residues 3348 to 3371 (TTTGQGEQQSELQLATTSTASSAS) are compositionally biased toward low complexity. Low complexity predominate over residues 3917 to 3932 (QHHQQQQMNLQLQQHQ). Residues 4195 to 4374 (HNQVHSVATG…KHQPHLRLSH (180 aa)) form the DOC domain. Disordered regions lie at residues 4633 to 4655 (ASTG…GAVL) and 4680 to 4702 (LRSR…ALPP). Gly residues predominate over residues 4638–4652 (SGSGGVSGSSSGNGG). The Zn(2+) site is built by cysteine 4991, cysteine 4994, cysteine 5009, histidine 5011, histidine 5014, cysteine 5017, cysteine 5038, cysteine 5041, cysteine 5101, and cysteine 5104. The RING-type; atypical zinc-finger motif lies at 4991 to 5042 (CMICFVEALSCAPSIHLECGHVFHYHCCKAVLEKRWSGPRITFGFSLCPICK). Residues 5096-5231 (YAYYVCFKCQ…LGCGVCRNAQ (136 aa)) are tandem cysteine domain. The active site involves cysteine 5115. 7 residues coordinate Zn(2+): cysteine 5130, cysteine 5133, cysteine 5142, histidine 5145, cysteine 5154, cysteine 5157, and cysteine 5158. The active site involves cysteine 5165. 7 residues coordinate Zn(2+): cysteine 5172, cysteine 5175, cysteine 5193, cysteine 5207, histidine 5213, cysteine 5224, and cysteine 5227.

The protein belongs to the RING-Cys relay (RCR) family. In terms of assembly, component of an E3 ubiquitin ligase complex composed of hiw, Rae1 and Fsn. Interacts with Rae1; the interaction with Rae1 may protect hiw from autophagy-mediated degradation. As to expression, express throughout the nervous system. Stage 13 embryos show expression in the central nervous system (CNS) at the longitudinal axon tracts around which the synaptic neuropil forms. Expression outside the CNS starts at stage 16 in presynaptic terminals at the periactive zone which surround the active zone. Expression at neuromuscular junctions (NMJ) and in the CNS is also seen in third instar larvae (at protein level).

It is found in the synapse. Its subcellular location is the cell projection. It localises to the axon. The catalysed reaction is [E2 ubiquitin-conjugating enzyme]-S-ubiquitinyl-L-cysteine + [acceptor protein]-L-threonine = [E2 ubiquitin-conjugating enzyme]-L-cysteine + [acceptor protein]-3-O-ubiquitinyl-L-threonine.. The protein operates within protein modification; protein ubiquitination. In terms of biological role, atypical E3 ubiquitin-protein ligase which specifically mediates ubiquitination of threonine and serine residues on target proteins, instead of ubiquitinating lysine residues. Shows esterification activity towards both threonine and serine, with a preference for threonine, and acts via two essential catalytic cysteine residues that relay ubiquitin to its substrate via thioester intermediates. Required in the presynaptic motoneuron to down-regulate the levels of wnd and restrain synaptic terminal growth at the neuromuscular junction (NMJ) together with Rae1 and Fsn. The chain is E3 ubiquitin-protein ligase highwire from Drosophila melanogaster (Fruit fly).